The following is a 505-amino-acid chain: ATP synthase subunit alpha (505 aa).

169–176 (GDRKTGKT) contacts ATP.

Belongs to the ATPase alpha/beta chains family. F-type ATPases have 2 components, CF(1) - the catalytic core - and CF(0) - the membrane proton channel. CF(1) has five subunits: alpha(3), beta(3), gamma(1), delta(1), epsilon(1). CF(0) has three main subunits: a(1), b(2) and c(9-12). The alpha and beta chains form an alternating ring which encloses part of the gamma chain. CF(1) is attached to CF(0) by a central stalk formed by the gamma and epsilon chains, while a peripheral stalk is formed by the delta and b chains.

It localises to the cell membrane. The catalysed reaction is ATP + H2O + 4 H(+)(in) = ADP + phosphate + 5 H(+)(out). Functionally, produces ATP from ADP in the presence of a proton gradient across the membrane. The alpha chain is a regulatory subunit. This Leuconostoc mesenteroides subsp. mesenteroides (strain ATCC 8293 / DSM 20343 / BCRC 11652 / CCM 1803 / JCM 6124 / NCDO 523 / NBRC 100496 / NCIMB 8023 / NCTC 12954 / NRRL B-1118 / 37Y) protein is ATP synthase subunit alpha.